Here is a 126-residue protein sequence, read N- to C-terminus: Aspartate 1-decarboxylase (126 aa).

Catalysis depends on Ser-25, which acts as the Schiff-base intermediate with substrate; via pyruvic acid. Ser-25 carries the pyruvic acid (Ser) modification. Thr-57 is a substrate binding site. Tyr-58 serves as the catalytic Proton donor. 73–75 (GGA) is a substrate binding site.

It belongs to the PanD family. In terms of assembly, heterooctamer of four alpha and four beta subunits. Pyruvate is required as a cofactor. Post-translationally, is synthesized initially as an inactive proenzyme, which is activated by self-cleavage at a specific serine bond to produce a beta-subunit with a hydroxyl group at its C-terminus and an alpha-subunit with a pyruvoyl group at its N-terminus.

The protein localises to the cytoplasm. It catalyses the reaction L-aspartate + H(+) = beta-alanine + CO2. It functions in the pathway cofactor biosynthesis; (R)-pantothenate biosynthesis; beta-alanine from L-aspartate: step 1/1. Functionally, catalyzes the pyruvoyl-dependent decarboxylation of aspartate to produce beta-alanine. This is Aspartate 1-decarboxylase from Xylella fastidiosa (strain M12).